The sequence spans 388 residues: Succinate--CoA ligase [ADP-forming] subunit beta (388 aa).

One can recognise an ATP-grasp domain in the interval 9 to 244 (KEILRKFGVA…PDEEDPKETQ (236 aa)). ATP is bound by residues Lys46, 53-55 (GRG), Glu99, Cys102, and Glu107. Residues Asn199 and Asp213 each contribute to the Mg(2+) site. Substrate contacts are provided by residues Asn264 and 321-323 (GIM).

The protein belongs to the succinate/malate CoA ligase beta subunit family. As to quaternary structure, heterotetramer of two alpha and two beta subunits. Mg(2+) serves as cofactor.

The catalysed reaction is succinate + ATP + CoA = succinyl-CoA + ADP + phosphate. It carries out the reaction GTP + succinate + CoA = succinyl-CoA + GDP + phosphate. The protein operates within carbohydrate metabolism; tricarboxylic acid cycle; succinate from succinyl-CoA (ligase route): step 1/1. Functionally, succinyl-CoA synthetase functions in the citric acid cycle (TCA), coupling the hydrolysis of succinyl-CoA to the synthesis of either ATP or GTP and thus represents the only step of substrate-level phosphorylation in the TCA. The beta subunit provides nucleotide specificity of the enzyme and binds the substrate succinate, while the binding sites for coenzyme A and phosphate are found in the alpha subunit. This is Succinate--CoA ligase [ADP-forming] subunit beta from Anaeromyxobacter dehalogenans (strain 2CP-C).